Here is a 142-residue protein sequence, read N- to C-terminus: Nucleoside diphosphate kinase (142 aa).

6 residues coordinate ATP: K11, F59, R87, T93, R104, and N114. H117 acts as the Pros-phosphohistidine intermediate in catalysis.

Belongs to the NDK family. In terms of assembly, homotetramer. The cofactor is Mg(2+).

The protein resides in the cytoplasm. The enzyme catalyses a 2'-deoxyribonucleoside 5'-diphosphate + ATP = a 2'-deoxyribonucleoside 5'-triphosphate + ADP. The catalysed reaction is a ribonucleoside 5'-diphosphate + ATP = a ribonucleoside 5'-triphosphate + ADP. Functionally, major role in the synthesis of nucleoside triphosphates other than ATP. The ATP gamma phosphate is transferred to the NDP beta phosphate via a ping-pong mechanism, using a phosphorylated active-site intermediate. The protein is Nucleoside diphosphate kinase of Hahella chejuensis (strain KCTC 2396).